We begin with the raw amino-acid sequence, 117 residues long: Large ribosomal subunit protein uL18 (117 aa).

This sequence belongs to the universal ribosomal protein uL18 family. As to quaternary structure, part of the 50S ribosomal subunit; part of the 5S rRNA/L5/L18/L25 subcomplex. Contacts the 5S and 23S rRNAs.

Functionally, this is one of the proteins that bind and probably mediate the attachment of the 5S RNA into the large ribosomal subunit, where it forms part of the central protuberance. The protein is Large ribosomal subunit protein uL18 of Yersinia pseudotuberculosis serotype O:1b (strain IP 31758).